We begin with the raw amino-acid sequence, 636 residues long: 1-deoxy-D-xylulose-5-phosphate synthase (636 aa).

Thiamine diphosphate-binding positions include histidine 72 and 113–115 (GHA). Aspartate 144 serves as a coordination point for Mg(2+). Thiamine diphosphate is bound by residues 145–146 (GA), asparagine 174, tyrosine 287, and glutamate 370. Asparagine 174 provides a ligand contact to Mg(2+).

It belongs to the transketolase family. DXPS subfamily. In terms of assembly, homodimer. The cofactor is Mg(2+). It depends on thiamine diphosphate as a cofactor.

It catalyses the reaction D-glyceraldehyde 3-phosphate + pyruvate + H(+) = 1-deoxy-D-xylulose 5-phosphate + CO2. Its pathway is metabolic intermediate biosynthesis; 1-deoxy-D-xylulose 5-phosphate biosynthesis; 1-deoxy-D-xylulose 5-phosphate from D-glyceraldehyde 3-phosphate and pyruvate: step 1/1. Its function is as follows. Catalyzes the acyloin condensation reaction between C atoms 2 and 3 of pyruvate and glyceraldehyde 3-phosphate to yield 1-deoxy-D-xylulose-5-phosphate (DXP). This chain is 1-deoxy-D-xylulose-5-phosphate synthase, found in Rippkaea orientalis (strain PCC 8801 / RF-1) (Cyanothece sp. (strain PCC 8801)).